A 141-amino-acid polypeptide reads, in one-letter code: Universal stress protein A homolog (141 aa).

The protein belongs to the universal stress protein A family. In terms of assembly, homodimer.

It is found in the cytoplasm. Functionally, required for resistance to DNA-damaging agents. The protein is Universal stress protein A homolog (uspA) of Haemophilus ducreyi (strain 35000HP / ATCC 700724).